A 296-amino-acid polypeptide reads, in one-letter code: MTAKSKFRGSFTALVTPFKNGGLDEAAFRGLVSWQIAEGTHGLVPVGTTGESPTVTHDEHKQLVEWCVDEAKARVPVIAGAGSNSTAEAIGLAKHAEKVGAAAVLVVTPYYNKPTQEGLYQHFKAVNDAIGIPIIIYNIPGRSVVDMSTDTMKRLFELKNISGVKDATANIARVSAQRAAMGEDFNQLSGEDITALGYMAHGGHGCISVTSNVAPRLCSEFQTACLKGDYATALKIQDKLVPLHTNLFIEANPAPVKYALSLLGKMSNTLRLPMVELSEANREIVRQSMVHAGLLN.

Position 49 (threonine 49) interacts with pyruvate. Tyrosine 137 (proton donor/acceptor) is an active-site residue. Lysine 165 (schiff-base intermediate with substrate) is an active-site residue. Isoleucine 207 is a pyruvate binding site.

This sequence belongs to the DapA family. In terms of assembly, homotetramer; dimer of dimers.

It localises to the cytoplasm. It catalyses the reaction L-aspartate 4-semialdehyde + pyruvate = (2S,4S)-4-hydroxy-2,3,4,5-tetrahydrodipicolinate + H2O + H(+). Its pathway is amino-acid biosynthesis; L-lysine biosynthesis via DAP pathway; (S)-tetrahydrodipicolinate from L-aspartate: step 3/4. Functionally, catalyzes the condensation of (S)-aspartate-beta-semialdehyde [(S)-ASA] and pyruvate to 4-hydroxy-tetrahydrodipicolinate (HTPA). In Afipia carboxidovorans (strain ATCC 49405 / DSM 1227 / KCTC 32145 / OM5) (Oligotropha carboxidovorans), this protein is 4-hydroxy-tetrahydrodipicolinate synthase.